We begin with the raw amino-acid sequence, 512 residues long: MLFRISMSATEFLLASLIFCLVFWVIRASRPRVPKGLKNPPGPWGWPLIGHILTLGKNPHLALSRMSQRYGDVLQIRIGSTPVLVLSGLDTIRQALVQQGDDFKGRPNLYSFTLISNGQSMSFGPDSGPVWAARRRLAQNGLKSFSIASDPASSSSCYLEEHVSKEAEVLISKLQEQMAGPGHFNPYRYVVISVANVICAICFGQRYDHNHQELLSLVNLSNNFGEVVGSGNPADFIPILRYLPNRSLNGFKDLNEKFHSFMQKMIKEHYKTFEKGHIRDITDSLIEHCQEKQLDENANIQLSDEKIVNVVLDLFGAGFDTVTTAISWSLMYLVTNPRVQRKIQEELDTVIGRSRRPRLSDRSHLPYMEAFILETFRHSSFVPFTIPHSTTRDTSLKGFYIPKGRCVFVNQWQINHDQKLWVNPSEFLPERFITPDGAIDKVLSEKVILFGLGKRKCIGETIARWEVFLFLAILLQRVEFSVPPGVKVDMTPIYGLTMKHACCEHFQMQLRS.

The interval 29–40 (SRPRVPKGLKNP) is mitochondrial targeting signal. A glycan (O-linked (GlcNAc) serine) is linked at Ser-67. Phe-224 lines the substrate pocket. Residue Cys-457 participates in heme binding.

It belongs to the cytochrome P450 family. As to quaternary structure, interacts with cytosolic chaperones HSP70 and HSP90; this interaction is required for initial targeting to mitochondria. Interacts (via mitochondrial targeting signal) with TOMM40 (via N-terminus); this interaction is required for translocation across the mitochondrial outer membrane. Requires heme as cofactor.

Its subcellular location is the endoplasmic reticulum membrane. It localises to the mitochondrion inner membrane. It is found in the microsome membrane. The protein resides in the cytoplasm. The catalysed reaction is an organic molecule + reduced [NADPH--hemoprotein reductase] + O2 = an alcohol + oxidized [NADPH--hemoprotein reductase] + H2O + H(+). It carries out the reaction estrone + reduced [NADPH--hemoprotein reductase] + O2 = 2-hydroxyestrone + oxidized [NADPH--hemoprotein reductase] + H2O + H(+). The enzyme catalyses estrone + reduced [NADPH--hemoprotein reductase] + O2 = 4-hydroxyestrone + oxidized [NADPH--hemoprotein reductase] + H2O + H(+). It catalyses the reaction estrone + reduced [NADPH--hemoprotein reductase] + O2 = 6alpha-hydroxyestrone + oxidized [NADPH--hemoprotein reductase] + H2O + H(+). The catalysed reaction is estrone + reduced [NADPH--hemoprotein reductase] + O2 = 15alpha-hydroxyestrone + oxidized [NADPH--hemoprotein reductase] + H2O + H(+). It carries out the reaction estrone + reduced [NADPH--hemoprotein reductase] + O2 = 16alpha-hydroxyestrone + oxidized [NADPH--hemoprotein reductase] + H2O + H(+). The enzyme catalyses 17beta-estradiol + reduced [NADPH--hemoprotein reductase] + O2 = 2-hydroxy-17beta-estradiol + oxidized [NADPH--hemoprotein reductase] + H2O + H(+). It catalyses the reaction 17beta-estradiol + reduced [NADPH--hemoprotein reductase] + O2 = 4-hydroxy-17beta-estradiol + oxidized [NADPH--hemoprotein reductase] + H2O + H(+). The catalysed reaction is 17beta-estradiol + reduced [NADPH--hemoprotein reductase] + O2 = 6alpha-hydroxy-17beta-estradiol + oxidized [NADPH--hemoprotein reductase] + H2O + H(+). It carries out the reaction 17beta-estradiol + reduced [NADPH--hemoprotein reductase] + O2 = 7alpha-hydroxy-17beta-estradiol + oxidized [NADPH--hemoprotein reductase] + H2O + H(+). The enzyme catalyses 17beta-estradiol + reduced [NADPH--hemoprotein reductase] + O2 = 15alpha-hydroxy-17beta-estradiol + oxidized [NADPH--hemoprotein reductase] + H2O + H(+). It catalyses the reaction (5Z,8Z,11Z)-eicosatrienoate + reduced [NADPH--hemoprotein reductase] + O2 = 19-hydroxy-(5Z,8Z,11Z)-eicosatrienoate + oxidized [NADPH--hemoprotein reductase] + H2O + H(+). The catalysed reaction is (5Z,8Z,11Z,14Z)-eicosatetraenoate + reduced [NADPH--hemoprotein reductase] + O2 = 16-hydroxy-(5Z,8Z,11Z,14Z)-eicosatetraenoate + oxidized [NADPH--hemoprotein reductase] + H2O + H(+). It carries out the reaction (5Z,8Z,11Z,14Z)-eicosatetraenoate + reduced [NADPH--hemoprotein reductase] + O2 = 17-hydroxy-(5Z,8Z,11Z,14Z)-eicosatetraenoate + oxidized [NADPH--hemoprotein reductase] + H2O + H(+). The enzyme catalyses (5Z,8Z,11Z,14Z)-eicosatetraenoate + reduced [NADPH--hemoprotein reductase] + O2 = 18-hydroxy-(5Z,8Z,11Z,14Z)-eicosatetraenoate + oxidized [NADPH--hemoprotein reductase] + H2O + H(+). It catalyses the reaction (5Z,8Z,11Z,14Z)-eicosatetraenoate + reduced [NADPH--hemoprotein reductase] + O2 = 19-hydroxy-(5Z,8Z,11Z,14Z)-eicosatetraenoate + oxidized [NADPH--hemoprotein reductase] + H2O + H(+). The catalysed reaction is (5Z,8Z,11Z,14Z,17Z)-eicosapentaenoate + reduced [NADPH--hemoprotein reductase] + O2 = 19-hydroxy-(5Z,8Z,11Z,14Z,17Z)-eicosapentaenoate + oxidized [NADPH--hemoprotein reductase] + H2O + H(+). It carries out the reaction (5Z,8Z,11Z,14Z)-eicosatetraenoate + reduced [NADPH--hemoprotein reductase] + O2 = (8R,9S)-epoxy-(5Z,11Z,14Z)-eicosatrienoate + oxidized [NADPH--hemoprotein reductase] + H2O + H(+). The enzyme catalyses (5Z,8Z,11Z,14Z)-eicosatetraenoate + reduced [NADPH--hemoprotein reductase] + O2 = (11R,12S)-epoxy-(5Z,8Z,14Z)-eicosatrienoate + oxidized [NADPH--hemoprotein reductase] + H2O + H(+). It catalyses the reaction (5Z,8Z,11Z,14Z)-eicosatetraenoate + reduced [NADPH--hemoprotein reductase] + O2 = (14S,15R)-epoxy-(5Z,8Z,11Z)-eicosatrienoate + oxidized [NADPH--hemoprotein reductase] + H2O + H(+). The catalysed reaction is (5Z,8Z,11Z,14Z)-eicosatetraenoate + reduced [NADPH--hemoprotein reductase] + O2 = (14R,15S)-epoxy-(5Z,8Z,11Z)-eicosatrienoate + oxidized [NADPH--hemoprotein reductase] + H2O + H(+). It carries out the reaction (5Z,8Z,11Z,14Z,17Z)-eicosapentaenoate + reduced [NADPH--hemoprotein reductase] + O2 = (17R,18S)-epoxy-(5Z,8Z,11Z,14Z)-eicosatetraenoate + oxidized [NADPH--hemoprotein reductase] + H2O + H(+). The enzyme catalyses (4Z,7Z,10Z,13Z,16Z,19Z)-docosahexaenoate + reduced [NADPH--hemoprotein reductase] + O2 = (19S,20R)-epoxy-(4Z,7Z,10Z,13Z,16Z)-docosapentaenoate + oxidized [NADPH--hemoprotein reductase] + H2O + H(+). It catalyses the reaction (4Z,7Z,10Z,13Z,16Z,19Z)-docosahexaenoate + reduced [NADPH--hemoprotein reductase] + O2 = (19R,20S)-epoxy-(4Z,7Z,10Z,13Z,16Z)-docosapentaenoate + oxidized [NADPH--hemoprotein reductase] + H2O + H(+). The catalysed reaction is all-trans-retinol + reduced [NADPH--hemoprotein reductase] + O2 = all-trans-retinal + oxidized [NADPH--hemoprotein reductase] + 2 H2O + H(+). It carries out the reaction all-trans-retinal + reduced [NADPH--hemoprotein reductase] + O2 = all-trans-retinoate + oxidized [NADPH--hemoprotein reductase] + H2O + 2 H(+). The enzyme catalyses (13S)-hydroperoxy-(9Z,11E)-octadecadienoate = 13-oxo-(9Z,11E)-octadecadienoate + H2O. It catalyses the reaction (12S)-hydroperoxy-(5Z,8Z,10E,14Z)-eicosatetraenoate = 12-oxo-(5Z,8Z,10E,14Z)-eicosatetraenoate + H2O. The catalysed reaction is (15S)-hydroperoxy-(5Z,8Z,11Z,13E)-eicosatetraenoate = 15-oxo-(5Z,8Z,11Z,13E)-eicosatetraenoate + H2O. It carries out the reaction (5S)-hydroperoxy-(6E,8Z,11Z,14Z)-eicosatetraenoate = 5-oxo-(6E,8Z,11Z,14Z)-eicosatetraenoate + H2O. The protein operates within steroid hormone biosynthesis. Its pathway is lipid metabolism; fatty acid metabolism. It participates in cofactor metabolism; retinol metabolism. A cytochrome P450 monooxygenase involved in the metabolism of various endogenous substrates, including fatty acids, steroid hormones and vitamins. Mechanistically, uses molecular oxygen inserting one oxygen atom into a substrate, and reducing the second into a water molecule, with two electrons provided by NADPH via cytochrome P450 reductase (CPR; NADPH-ferrihemoprotein reductase). Catalyzes the hydroxylation of carbon-hydrogen bonds. Exhibits high catalytic activity for the formation of hydroxyestrogens from estrone (E1) and 17beta-estradiol (E2), namely 2-hydroxy E1 and E2, as well as D-ring hydroxylated E1 and E2 at the C15alpha and C16alpha positions. Displays different regioselectivities for polyunsaturated fatty acids (PUFA) hydroxylation. Catalyzes the epoxidation of double bonds of certain PUFA. Converts arachidonic acid toward epoxyeicosatrienoic acid (EET) regioisomers, 8,9-, 11,12-, and 14,15-EET, that function as lipid mediators in the vascular system. Displays an absolute stereoselectivity in the epoxidation of eicosapentaenoic acid (EPA) producing the 17(R),18(S) enantiomer. May play an important role in all-trans retinoic acid biosynthesis in extrahepatic tissues. Catalyzes two successive oxidative transformation of all-trans retinol to all-trans retinal and then to the active form all-trans retinoic acid. May also participate in eicosanoids metabolism by converting hydroperoxide species into oxo metabolites (lipoxygenase-like reaction, NADPH-independent). This Macaca mulatta (Rhesus macaque) protein is Cytochrome P450 1A1 (CYP1A1).